The sequence spans 158 residues: MANYIPNDWRDNDITNRYIRYRRTGPHKTTGPTTVYKKLECTKKIERWGIPLTKYRVGIATLEIPPESKLVRLLYGTFGDIRFDQAFVKKIEYINDKDKYISDDYVCTSEIYNLENYPLNFKVGQMVNFIDNDQLNENQHDLEGPGISAYFSKKESKN.

It belongs to the mimivirus L223/L227/L812 family.

This is an uncharacterized protein from Acanthamoeba polyphaga mimivirus (APMV).